Here is a 301-residue protein sequence, read N- to C-terminus: tRNA dimethylallyltransferase (301 aa).

9 to 16 (GPTASGKS) is a binding site for ATP. Position 11–16 (11–16 (TASGKS)) interacts with substrate. Residues 34–37 (DSMQ) are interaction with substrate tRNA.

This sequence belongs to the IPP transferase family. In terms of assembly, monomer. Mg(2+) serves as cofactor.

The enzyme catalyses adenosine(37) in tRNA + dimethylallyl diphosphate = N(6)-dimethylallyladenosine(37) in tRNA + diphosphate. Its function is as follows. Catalyzes the transfer of a dimethylallyl group onto the adenine at position 37 in tRNAs that read codons beginning with uridine, leading to the formation of N6-(dimethylallyl)adenosine (i(6)A). The protein is tRNA dimethylallyltransferase of Corynebacterium efficiens (strain DSM 44549 / YS-314 / AJ 12310 / JCM 11189 / NBRC 100395).